The sequence spans 214 residues: MTRILKVKPTRMELLRLKRRIKLAEKGHKILKEKQDALIMEFFTIYDEALALRREVNQKIAEAFEQLRLAEIDVGIVKLSEIALSVKSNKEIKIKRRNIMGVPVPLIEAEGFRRDPYERGYAFVSTSPKVDVTAETFEEVLELVTRLAEIEETLKRLAKEIEKTKRRVNALEYIIIPRMAETVKYISQHLDEMERENFFRLKRVKALLEAKAQG.

The protein belongs to the V-ATPase D subunit family. Has multiple subunits with at least A(3), B(3), C, D, E, F, H, I and proteolipid K(x).

It is found in the cell membrane. Functionally, component of the A-type ATP synthase that produces ATP from ADP in the presence of a proton gradient across the membrane. The chain is A-type ATP synthase subunit D from Thermococcus sibiricus (strain DSM 12597 / MM 739).